The chain runs to 298 residues: Max-like protein X (298 aa).

Residues Met-1–His-63 form a disordered region. Position 7 is a phosphoserine (Ser-7). Basic residues predominate over residues Gly-28–Gly-37. 5 positions are modified to phosphoserine: Ser-45, Ser-48, Ser-74, Ser-77, and Ser-98. The span at Ser-98–Asn-109 shows a compositional bias: polar residues. The interval Ser-98 to Gln-119 is disordered. Residues Arg-129–Leu-187 enclose the bHLH domain. The interval Gln-194–Asn-214 is leucine-zipper.

As to quaternary structure, efficient DNA binding requires dimerization with another bHLH protein. Binds DNA as a heterodimer with MAD1, MAD4, MNT, WBSCR14 and MLXIP. Can also bind DNA as a homodimer. As to expression, expressed in all tissues examined: stomach, duodenum, jejunum, ileum, colon, liver, pancreas, salivary gland, kidney, spleen, lung, heart, skeletal muscle, brain, ovary and testis.

The protein localises to the cytoplasm. It localises to the nucleus. Transcription regulator. Forms a sequence-specific DNA-binding protein complex with MAD1, MAD4, MNT, WBSCR14 and MLXIP which recognizes the core sequence 5'-CACGTG-3'. The TCFL4-MAD1, TCFL4-MAD4, TCFL4-WBSCR14 complexes are transcriptional repressors. Plays a role in transcriptional activation of glycolytic target genes. Involved in glucose-responsive gene regulation. This is Max-like protein X (Mlx) from Mus musculus (Mouse).